The primary structure comprises 1067 residues: UPF0507 protein KLLA0D01133g (1067 aa).

The region spanning 280 to 432 is the VPS9 domain; the sequence is IVEDQELEHR…FHQDTVDSLT (153 aa).

This sequence belongs to the UPF0507 family.

The sequence is that of UPF0507 protein KLLA0D01133g from Kluyveromyces lactis (strain ATCC 8585 / CBS 2359 / DSM 70799 / NBRC 1267 / NRRL Y-1140 / WM37) (Yeast).